The chain runs to 85 residues: Putative regulatory protein DICTH_1339 (85 aa).

Belongs to the RemA family.

The protein is Putative regulatory protein DICTH_1339 of Dictyoglomus thermophilum (strain ATCC 35947 / DSM 3960 / H-6-12).